Consider the following 232-residue polypeptide: Ribose-5-phosphate isomerase A (232 aa).

Substrate-binding positions include 28-31 (TGST), 83-86 (DGAD), and 96-99 (KGGG). Catalysis depends on glutamate 105, which acts as the Proton acceptor. Lysine 123 provides a ligand contact to substrate.

This sequence belongs to the ribose 5-phosphate isomerase family. Homodimer.

The enzyme catalyses aldehydo-D-ribose 5-phosphate = D-ribulose 5-phosphate. It participates in carbohydrate degradation; pentose phosphate pathway; D-ribose 5-phosphate from D-ribulose 5-phosphate (non-oxidative stage): step 1/1. Catalyzes the reversible conversion of ribose-5-phosphate to ribulose 5-phosphate. This chain is Ribose-5-phosphate isomerase A, found in Rhizobium leguminosarum bv. trifolii (strain WSM2304).